The chain runs to 377 residues: Formate dehydrogenase, mitochondrial (377 aa).

The transit peptide at M1–K29 directs the protein to the mitochondrion. Substrate-binding residues include I121 and N145. NAD(+) is bound by residues T146, D220, P255 to K259, N281, D307, and H331 to G334.

Belongs to the D-isomer specific 2-hydroxyacid dehydrogenase family. FDH subfamily. In terms of assembly, homodimer.

The protein resides in the mitochondrion. The catalysed reaction is formate + NAD(+) = CO2 + NADH. In terms of biological role, catalyzes the NAD(+)-dependent oxidation of formate to carbon dioxide. Involved in the cell stress response. The polypeptide is Formate dehydrogenase, mitochondrial (Hordeum vulgare (Barley)).